We begin with the raw amino-acid sequence, 200 residues long: Peptidyl-tRNA hydrolase (200 aa).

A tRNA-binding site is contributed by Tyr-23. Residue His-28 is the Proton acceptor of the active site. Residues Phe-79, Asn-81, and Asn-127 each coordinate tRNA.

The protein belongs to the PTH family. In terms of assembly, monomer.

It localises to the cytoplasm. The enzyme catalyses an N-acyl-L-alpha-aminoacyl-tRNA + H2O = an N-acyl-L-amino acid + a tRNA + H(+). In terms of biological role, hydrolyzes ribosome-free peptidyl-tRNAs (with 1 or more amino acids incorporated), which drop off the ribosome during protein synthesis, or as a result of ribosome stalling. Functionally, catalyzes the release of premature peptidyl moieties from peptidyl-tRNA molecules trapped in stalled 50S ribosomal subunits, and thus maintains levels of free tRNAs and 50S ribosomes. This Streptomyces coelicolor (strain ATCC BAA-471 / A3(2) / M145) protein is Peptidyl-tRNA hydrolase.